The primary structure comprises 427 residues: V-type proton ATPase subunit C 2 (427 aa).

Residues 298–320 are disordered; that stretch reads PLGNPARPAAGQTDRDRESEGEG.

Belongs to the V-ATPase C subunit family. As to quaternary structure, V-ATPase is a heteromultimeric enzyme made up of two complexes: the ATP-hydrolytic V1 complex and the proton translocation V0 complex. The V1 complex consists of three catalytic AB heterodimers that form a heterohexamer, three peripheral stalks each consisting of EG heterodimers, one central rotor including subunits D and F, and the regulatory subunits C and H. The proton translocation complex V0 consists of the proton transport subunit a, a ring of proteolipid subunits c9c'', rotary subunit d, subunits e and f, and the accessory subunits ATP6AP1/Ac45 and ATP6AP2/PRR. As to expression, predominantly expressed in the lung and kidney. Isoform 1 is lung-specific while isoform 3 is a kidney-specific isoform. Isoform 1 is localized in the lamellar bodies of type II alveolar cells. Isoform 2 is strongly expressed in the cortical and medulla collecting ducts and is found in the plasma membranes of renal alpha and beta intercalated cells.

Its function is as follows. Subunit of the V1 complex of vacuolar(H+)-ATPase (V-ATPase), a multisubunit enzyme composed of a peripheral complex (V1) that hydrolyzes ATP and a membrane integral complex (V0) that translocates protons. V-ATPase is responsible for acidifying and maintaining the pH of intracellular compartments and in some cell types, is targeted to the plasma membrane, where it is responsible for acidifying the extracellular environment. Subunit C is necessary for the assembly of the catalytic sector of the enzyme and is likely to have a specific function in its catalytic activity. The protein is V-type proton ATPase subunit C 2 (Atp6v1c2) of Mus musculus (Mouse).